The sequence spans 411 residues: Putative polysaccharide ligase RC0486 (411 aa).

10 consecutive transmembrane segments (helical) span residues 15–35, 78–98, 101–121, 133–153, 166–186, 207–227, 233–253, 328–348, 361–381, and 383–403; these read LGMLAGLSAAATVTIFLLISF, GITMLFTAWCFISCLFAIHLI, LATFTQVFILLFLGFAVSNSA, LIFGILTAILLFFIEYSSNGF, MLDRGCALLSITAWVAIIILL, ISDSLASFLGFGIGGVIFILT, IFFKLIAISLITGSLLFPVIA, ILQITLELGIIGLILFLCLVY, NFKAISYACFINYYIIGMISY, and IWQIWWISSGIWVLVLMKLLV.

This sequence belongs to the O-antigen ligase family.

The protein resides in the membrane. This Rickettsia conorii (strain ATCC VR-613 / Malish 7) protein is Putative polysaccharide ligase RC0486.